A 430-amino-acid chain; its full sequence is MEF2-activating motif and SAP domain-containing transcriptional regulator (430 aa).

The MEF2-binding motif lies at 12–28 (IIRSKFRSVLQLRIHRR). Disordered stretches follow at residues 84–172 (CWSL…PLPH), 204–239 (KSML…RFRP), 280–301 (VATT…APAS), and 330–416 (EDQV…DLSD). Over residues 87-103 (LKKESPKTSQHWREPKP) the composition is skewed to basic and acidic residues. Positions 147–170 (QPPPRMKPTPLTPSPPGVPSPSPL) are enriched in pro residues. The SAP domain maps to 181 to 215 (LEELTVSELRQQLRLRGLPVSGTKSMLLERMRGGA). Over residues 207 to 228 (LLERMRGGAPPRERPKARREDS) the composition is skewed to basic and acidic residues. The segment at 224 to 430 (RREDSAAGAP…RLWDLLEDPW (207 aa)) is transcription activation. Low complexity-rich tracts occupy residues 363 to 373 (SSVFSSSLPSP) and 393 to 403 (ALSGGPSLGCG).

Interacts with MEF2C.

It is found in the nucleus. Functionally, transcriptional coactivator. Stimulates the transcriptional activity of MEF2C. Stimulates MYOD1 activity in part via MEF2, resulting in an enhancement of skeletal muscle differentiation. The chain is MEF2-activating motif and SAP domain-containing transcriptional regulator (MAMSTR) from Bos taurus (Bovine).